A 70-amino-acid polypeptide reads, in one-letter code: Mu-conotoxin PnIVB (70 aa).

The N-terminal stretch at 1 to 20 (MMSKLGVLLIICLLLCPLTA) is a signal peptide. Residues 21–51 (VPQDGDQPADQPAERMQDDISSEHHPFFDPV) constitute a propeptide that is removed on maturation.

Post-translationally, contains 3 disulfide bonds. They are not added, since framework IV presents two different connectivities (I-V, II-III, IV-VI and I-III, II-V, IV-VI). In terms of tissue distribution, expressed by the venom duct.

It localises to the secreted. Its function is as follows. Mu-conotoxins block voltage-gated sodium channels (Nav). Blocks reversibly sodium channels in molluskan neurons, but has no effect on sodium currents in bovine chromaffin cells or in rat brain synaptosomes. Induces paralysis in bivalve mollusks (Mytilus). No effect are observed on fish (Gambusia) and fly larvae (Sarcophaga). Is approximately 6 times more potent than PnIVA in blockade of the sodium current in Lymnaea neurons. In Conus pennaceus (Feathered cone), this protein is Mu-conotoxin PnIVB.